The chain runs to 244 residues: L-xylulose reductase (244 aa).

Met-1 carries the post-translational modification N-acetylmethionine. 11-40 (LVTGAGKGIGRGTVQALHATGARVVAVSRT) serves as a coordination point for NADP(+). The residue at position 21 (Arg-21) is an Omega-N-methylarginine. Ser-46 is subject to Phosphoserine. Position 136 (Ser-136) interacts with substrate. The Proton acceptor role is filled by Tyr-149. NADP(+) is bound at residue Lys-153.

Belongs to the short-chain dehydrogenases/reductases (SDR) family. As to quaternary structure, homotetramer. In terms of tissue distribution, highly expressed in kidney, liver and epididymis. In the epididymis, it is mainly expressed in the proximal and distal sections of the corpus region. Weakly or not expressed in brain, lung, heart, spleen and testis.

Its subcellular location is the membrane. The catalysed reaction is xylitol + NADP(+) = L-xylulose + NADPH + H(+). In terms of biological role, catalyzes the NADPH-dependent reduction of several pentoses, tetroses, trioses, alpha-dicarbonyl compounds and L-xylulose. Participates in the uronate cycle of glucose metabolism. May play a role in the water absorption and cellular osmoregulation in the proximal renal tubules by producing xylitol, an osmolyte, thereby preventing osmolytic stress from occurring in the renal tubules. The protein is L-xylulose reductase (DCXR) of Homo sapiens (Human).